Here is a 354-residue protein sequence, read N- to C-terminus: Holliday junction branch migration complex subunit RuvB (354 aa).

A disordered region spans residues 1–22 (MTIQTDDFAPAPPRVVSAAPAS). The interval 5-193 (TDDFAPAPPR…FGIVARLEFY (189 aa)) is large ATPase domain (RuvB-L). ATP is bound by residues leucine 32, arginine 33, glycine 74, lysine 77, threonine 78, threonine 79, 140–142 (EDY), arginine 183, tyrosine 193, and arginine 230. A Mg(2+)-binding site is contributed by threonine 78. The interval 194 to 264 (TPEELALIVR…IAHKALVMLD (71 aa)) is small ATPAse domain (RuvB-S). The segment at 267-354 (PQGFDLMDRK…RSDGQDLFGI (88 aa)) is head domain (RuvB-H). DNA is bound by residues arginine 303, arginine 322, and arginine 327.

Belongs to the RuvB family. In terms of assembly, homohexamer. Forms an RuvA(8)-RuvB(12)-Holliday junction (HJ) complex. HJ DNA is sandwiched between 2 RuvA tetramers; dsDNA enters through RuvA and exits via RuvB. An RuvB hexamer assembles on each DNA strand where it exits the tetramer. Each RuvB hexamer is contacted by two RuvA subunits (via domain III) on 2 adjacent RuvB subunits; this complex drives branch migration. In the full resolvosome a probable DNA-RuvA(4)-RuvB(12)-RuvC(2) complex forms which resolves the HJ.

It localises to the cytoplasm. The catalysed reaction is ATP + H2O = ADP + phosphate + H(+). The RuvA-RuvB-RuvC complex processes Holliday junction (HJ) DNA during genetic recombination and DNA repair, while the RuvA-RuvB complex plays an important role in the rescue of blocked DNA replication forks via replication fork reversal (RFR). RuvA specifically binds to HJ cruciform DNA, conferring on it an open structure. The RuvB hexamer acts as an ATP-dependent pump, pulling dsDNA into and through the RuvAB complex. RuvB forms 2 homohexamers on either side of HJ DNA bound by 1 or 2 RuvA tetramers; 4 subunits per hexamer contact DNA at a time. Coordinated motions by a converter formed by DNA-disengaged RuvB subunits stimulates ATP hydrolysis and nucleotide exchange. Immobilization of the converter enables RuvB to convert the ATP-contained energy into a lever motion, pulling 2 nucleotides of DNA out of the RuvA tetramer per ATP hydrolyzed, thus driving DNA branch migration. The RuvB motors rotate together with the DNA substrate, which together with the progressing nucleotide cycle form the mechanistic basis for DNA recombination by continuous HJ branch migration. Branch migration allows RuvC to scan DNA until it finds its consensus sequence, where it cleaves and resolves cruciform DNA. This is Holliday junction branch migration complex subunit RuvB from Variovorax paradoxus (strain S110).